Consider the following 147-residue polypeptide: MRADFFLSDNRAALLKRGLTIILSFLVFTSIFLLPSPSLAEDVKGADDPIVVAGNIKVKPDKKEEFIALSQTFIEPSRSEPGCISYSFYEDETEDNSFLFFEVWRNRAALDYHFQTPYFHEFVEKSPDLLAKPAEIKIYKIAETQTL.

Positions 50-138 (IVVAGNIKVK…LLAKPAEIKI (89 aa)) constitute an ABM domain.

It belongs to the LsrG family.

This is an uncharacterized protein from Synechocystis sp. (strain ATCC 27184 / PCC 6803 / Kazusa).